Reading from the N-terminus, the 198-residue chain is Riboflavin synthase (198 aa).

2 Lumazine-binding repeats span residues 1–95 (MFSG…IGGH) and 96–188 (FVSG…VDTV). 2,4-dihydroxypteridine-binding positions include 4-6 (GII), 46-48 (CLT), 60-65 (DVTEET), 99-101 (GHV), Lys-130, 139-141 (SLT), and 153-158 (SVIPET).

As to quaternary structure, homotrimer.

It carries out the reaction 2 6,7-dimethyl-8-(1-D-ribityl)lumazine + H(+) = 5-amino-6-(D-ribitylamino)uracil + riboflavin. Its pathway is cofactor biosynthesis; riboflavin biosynthesis; riboflavin from 2-hydroxy-3-oxobutyl phosphate and 5-amino-6-(D-ribitylamino)uracil: step 2/2. In terms of biological role, catalyzes the dismutation of two molecules of 6,7-dimethyl-8-ribityllumazine, resulting in the formation of riboflavin and 5-amino-6-(D-ribitylamino)uracil. This chain is Riboflavin synthase (ribE), found in Chlamydia muridarum (strain MoPn / Nigg).